A 112-amino-acid polypeptide reads, in one-letter code: Urease subunit gamma (112 aa).

The protein belongs to the urease gamma subunit family. Heterotrimer of UreA (gamma), UreB (beta) and UreC (alpha) subunits. Three heterotrimers associate to form the active enzyme.

It localises to the cytoplasm. It carries out the reaction urea + 2 H2O + H(+) = hydrogencarbonate + 2 NH4(+). It functions in the pathway nitrogen metabolism; urea degradation; CO(2) and NH(3) from urea (urease route): step 1/1. The sequence is that of Urease subunit gamma from Gloeothece citriformis (strain PCC 7424) (Cyanothece sp. (strain PCC 7424)).